Reading from the N-terminus, the 616-residue chain is MERKPLELESTDNHQNPSSAVYGGSVTAVDSVEEDVQNQKKVVYRGWKVMPFIIGNETFEKLGIIGTLSNLLVYLTAVFNLKSITAATIINAFSGTINFGTFVAAFLCDTYFGRYKTLSVAVIACFLGSFVILLTAAVPQLHPAACGTAADSICNGPSGGQIAFLLMGLGFLVVGAGGIRPCNLAFGADQFNPKSESGKRGIDSFFNWYFFTFTFAQILSLTLVVYVQSNVSWTIGLTIPAVLMFLACLIFFAGDKLYVKIKASGSPLAGIAQVIAVAIKKRGLKPAKQPWLNLYNYYPPKYANSKLKYTDQFRFLDKAAILTPEDKLQPDGKPADPWKLCTMQQVEEVKCIVRVLPIWFASSIYYLTITQQMTYPVFQALQSDRRLGSGGFVIPAATYVVFLMTGMTVFIVVYDRVLVPTMRRITGLDTGITLLQRIGTGIFFATASLVVAGFVEERRRTFALTKPTLGMAPRKGEISSMSAMWLIPQLSLAGVAEAFAAIGQMEFYYKQFPENMRSFAGSIFYVGGGVSSYLGSFLIATVHRTTQNSSGGNWLAEDLNKGRLDLFYFMIAGILAVNFAYFLVMSRWYRYKGSDDEVTTYETNENIIKQQDKNVA.

Residues 1–22 (MERKPLELESTDNHQNPSSAVY) form a disordered region. Helical transmembrane passes span 59-79 (FEKL…TAVF), 87-107 (ATII…AAFL), 118-138 (LSVA…TAAV), 159-179 (GGQI…AGGI), 205-225 (FFNW…TLVV), 233-253 (WTIG…IFFA), 349-369 (VKCI…YLTI), 392-412 (FVIP…VFIV), 435-455 (LQRI…AGFV), 483-503 (AMWL…AAIG), 519-539 (FAGS…SFLI), and 566-586 (LFYF…LVMS).

It belongs to the major facilitator superfamily. Proton-dependent oligopeptide transporter (POT/PTR) (TC 2.A.17) family. Expressed in roots. Detected in shoots, stems and flowers. Expressed in veins and in the root vasculature with highest expression in lateral branching points.

The protein localises to the cell membrane. Functionally, high-affinity, proton-dependent glucosinolate-specific transporter. Involved in apoplasmic phloem-loading of glucosinolates and in bidirectional long-distance transport of aliphatic but not indole glucosinolates. May be involved in removal of glucosinolates from the xylem in roots. This is Protein NRT1/ PTR FAMILY 2.11 (NPF2.11) from Arabidopsis thaliana (Mouse-ear cress).